Here is a 140-residue protein sequence, read N- to C-terminus: ATP synthase epsilon chain (140 aa).

This sequence belongs to the ATPase epsilon chain family. In terms of assembly, F-type ATPases have 2 components, CF(1) - the catalytic core - and CF(0) - the membrane proton channel. CF(1) has five subunits: alpha(3), beta(3), gamma(1), delta(1), epsilon(1). CF(0) has three main subunits: a, b and c.

It localises to the cell inner membrane. Its function is as follows. Produces ATP from ADP in the presence of a proton gradient across the membrane. The protein is ATP synthase epsilon chain of Nitrosococcus oceani (strain ATCC 19707 / BCRC 17464 / JCM 30415 / NCIMB 11848 / C-107).